A 465-amino-acid polypeptide reads, in one-letter code: Keratin, type I cytoskeletal 13 (465 aa).

The segment covering 1-28 (MNFTSFSITQGSRPQPPSTRGFSGNSFK) has biased composition (polar residues). The tract at residues 1–47 (MNFTSFSITQGSRPQPPSTRGFSGNSFKSDLIPQSRRSHSVYGTPGS) is disordered. The segment at 1–98 (MNFTSFSITQ…SGGSDLLLGT (98 aa)) is head. Residues 99–135 (SGKEAMQNLNDRLASYLEKVRSLEERNRELEQKIREW) are coil 1A. The IF rod domain occupies 100–412 (GKEAMQNLND…ILLEGDEGKF (313 aa)). The interval 136–154 (YEKQGAGTKTKDFSHYFKI) is linker 1. The segment at 155–246 (IADLQKQIHD…KSHDEEMKAL (92 aa)) is coil 1B. The segment at 247 to 269 (RSQLGGQVNVEVDAAPAEDLTKK) is linker 12. The tract at residues 270-408 (LERMRQQYEQ…RTYRILLEGD (139 aa)) is coil 2. The segment at 409-465 (EGKFQTSPHHPSIVTKQTETVVTPVVITNVKTVVEEIIDGKIVSKKEYPGPPEKLMI) is tail.

The protein belongs to the intermediate filament family. In terms of assembly, heterotetramer of two type I and two type II keratins. Expressed in skin.

Type 1 keratin. May maintain oral mucosal cell homeostasis and tissue organization in response to mechanical stress. This is Keratin, type I cytoskeletal 13 (KRT13) from Protopterus aethiopicus (Marbled lungfish).